The primary structure comprises 176 residues: Small ribosomal subunit protein uS5 (176 aa).

The S5 DRBM domain occupies 11–74 (LSEVLVDVNR…QAAKKRMMKV (64 aa)).

This sequence belongs to the universal ribosomal protein uS5 family. In terms of assembly, part of the 30S ribosomal subunit. Contacts proteins S4 and S8.

Its function is as follows. With S4 and S12 plays an important role in translational accuracy. Located at the back of the 30S subunit body where it stabilizes the conformation of the head with respect to the body. This chain is Small ribosomal subunit protein uS5, found in Rickettsia peacockii (strain Rustic).